Consider the following 288-residue polypeptide: Glutamate racemase (288 aa).

The segment at 1–21 (MAIARQDVNISSPEATTSDAQ) is disordered. The span at 8 to 21 (VNISSPEATTSDAQ) shows a compositional bias: polar residues. Substrate is bound by residues 32–33 (DS) and 64–65 (YG). Cys-96 (proton donor/acceptor) is an active-site residue. Position 97–98 (97–98 (NT)) interacts with substrate. Residue Cys-209 is the Proton donor/acceptor of the active site. 210–211 (TH) provides a ligand contact to substrate.

This sequence belongs to the aspartate/glutamate racemases family.

The catalysed reaction is L-glutamate = D-glutamate. It participates in cell wall biogenesis; peptidoglycan biosynthesis. In terms of biological role, provides the (R)-glutamate required for cell wall biosynthesis. The chain is Glutamate racemase from Proteus mirabilis (strain HI4320).